Consider the following 423-residue polypeptide: MTRLDSVERAVADIAAGKAVVVIDDEDRENEGDLIFAAEKATPELVAFMVRYTSGYLCVPLAGEICDRLGLLPMYAVNQDKHGTAYTVTVDAKVGVGTGISASDRATTMRLLADPDSVADDFTKPGHVVPLRAKDGGVLRRPGHTEAAVDLARLAGLQAAGTICEIVSQKDEGAMAQTDELRIFADEHDLALISIADLIEWRRKHEKHIARVAEARIPTRHGEFRAVGYTSIYEDVEHVALVKGDIAGPHGDGHDVLVRVHSECLTGDVFGSRRCDCGPQLDAALAMVAREGRGIVLYMRGHEGRGIGLMHKLQAYQLQDAGDDTVDANLKLGLPADARDYGTGAQILVDLGVRSMRLLTNNPAKRVGLDGYGLHIIERVPLPVRANAENIRYLMTKRDRMGHDLVGLDDFDEAVPGEFGGAV.

Residues M1–K204 are DHBP synthase. D-ribulose 5-phosphate-binding positions include R28–E29, D33, R141–T145, and E165. Mg(2+) is bound at residue E29. Residue H144 coordinates Mg(2+). The GTP cyclohydrolase II stretch occupies residues H205–V423. R259–E263 provides a ligand contact to GTP. Zn(2+) is bound by residues C264, C275, and C277. GTP-binding positions include Q280, E303–R305, and T325. Residue D337 is the Proton acceptor; for GTP cyclohydrolase activity of the active site. R339 serves as the catalytic Nucleophile; for GTP cyclohydrolase activity. GTP contacts are provided by T360 and K365.

The protein in the N-terminal section; belongs to the DHBP synthase family. It in the C-terminal section; belongs to the GTP cyclohydrolase II family. Mg(2+) is required as a cofactor. The cofactor is Mn(2+). Requires Zn(2+) as cofactor.

The catalysed reaction is D-ribulose 5-phosphate = (2S)-2-hydroxy-3-oxobutyl phosphate + formate + H(+). It catalyses the reaction GTP + 4 H2O = 2,5-diamino-6-hydroxy-4-(5-phosphoribosylamino)-pyrimidine + formate + 2 phosphate + 3 H(+). It functions in the pathway cofactor biosynthesis; riboflavin biosynthesis; 2-hydroxy-3-oxobutyl phosphate from D-ribulose 5-phosphate: step 1/1. The protein operates within cofactor biosynthesis; riboflavin biosynthesis; 5-amino-6-(D-ribitylamino)uracil from GTP: step 1/4. Catalyzes the conversion of D-ribulose 5-phosphate to formate and 3,4-dihydroxy-2-butanone 4-phosphate. Functionally, catalyzes the conversion of GTP to 2,5-diamino-6-ribosylamino-4(3H)-pyrimidinone 5'-phosphate (DARP), formate and pyrophosphate. This is Riboflavin biosynthesis protein RibBA from Mycolicibacterium gilvum (strain PYR-GCK) (Mycobacterium gilvum (strain PYR-GCK)).